We begin with the raw amino-acid sequence, 92 residues long: Evasin P942 (92 aa).

The first 26 residues, 1–26, serve as a signal peptide directing secretion; it reads MEVKTFAFLQIAVLIALGLHLAPAGS. Cystine bridges form between C44-C63, C48-C65, and C59-C76. N47 carries N-linked (GlcNAc...) asparagine glycosylation. N-linked (GlcNAc...) asparagine glycosylation occurs at N70.

The protein localises to the secreted. In terms of biological role, salivary chemokine-binding protein which binds to host chemokines CXCL1, CXCL2, CXCL3, CXCL4, CXCL5, CXCL6, CXCL10, CXCL11 and CXCL13. The polypeptide is Evasin P942 (Ixodes ricinus (Common tick)).